The chain runs to 687 residues: Carboxysome assembly protein CcmM (687 aa).

The segment at 242-327 is rbcS-like repeat 1, SSUL1; the sequence is SINSDITNQI…RVVEVIIQRP (86 aa). 2 disordered regions span residues 328-355 and 442-476; these read GDVP…SAVA and VHRP…SSAG. The segment covering 335–346 has biased composition (polar residues); the sequence is SRGTTTTKALSS. The segment at 366-445 is rbcS-like repeat 2, SSUL2; that stretch reads ANQLRALLHQ…RVAEIVVHRP (80 aa). Positions 451–472 are enriched in low complexity; sequence GKPSSSSSSVGYKSAPVSSAGG. Residues 480–562 form a rbcS-like repeat 3, SSUL3 region; that stretch reads PEVIATVRGL…RVLEQIIQRP (83 aa). Residues 565 to 590 are disordered; that stretch reads NVVAGRSPSSSSASTSSSASSNGFGS. Residues 568–587 show a composition bias toward low complexity; the sequence is AGRSPSSSSASTSSSASSNG. The interval 599 to 687 is rbcS-like repeat 4, SSUL4; the sequence is SAVRLDNSVV…RVLETIIQRP (89 aa).

This sequence belongs to the gamma-class carbonic anhydrase family. Probably forms homotrimers. Full length CcmM interacts with CcaA, CcmK1, CcmK2, CcmK4, CcmL, CcmN and itself, while the N-terminus of CcmM (first 249 residues) only interacts with CcaA, CcmM and CcmN. A probable CcmM-CcaA-CcmN complex as well as a CcaA-RuBisCO-CcmM complex can also be isolated. Interacts with full-length CcaA and the first 220 residues of CcaA; surface residues Gln-177 to Gln-188 are responsible in part for binding. Multiple forms of the protein of 73 (full length), 62, 52 (the most predominant form) and 36 kDa are seen even in the presence of protease inhibitors. CcmM52 interacts with CcaA.

It localises to the carboxysome. Functions as a scaffold protein for the assembly of beta-carboxysomes, initiates carboxysome assembly via its N-terminal domain binding to CcaA, CcmK and CcmL. Binds HCO(3)-, suggesting it may play a role in the activity or regulation of bicarbonate dehydration. Also initiates carboxysome assembly by coalescing RuBisCO (ribulose bisphosphate carboxylase, rbcL-rbcS) via its SSU-like domains. Produced as a full-length and a shorter form; both forms are required for correct carboxysome assembly and growth. Despite its strong similarity to gamma-class carbonic anhydrase (CA) it does not have detectable CA activity. In terms of biological role, beta-carboxysome assembly initiates when soluble RuBisCO is condensed into a liquid matrix in a pre-carboxysome by the RbcS-like domains of probably both forms of CcmM. CcmN interacts with the N-terminus of full length CcmM, and then recruits the shell proteins (CcmK) via CcmN's encapsulation peptide. CcmM73 also interacts with CcmK proteins and CcmL directly. Shell formation requires CcmK proteins and CcmO. CcmL caps the otherwise elongated carboxysome. Once fully encapsulated carboxysomes are formed, they migrate within the cell probably via interactions with the cytoskeleton. The protein is Carboxysome assembly protein CcmM of Synechocystis sp. (strain ATCC 27184 / PCC 6803 / Kazusa).